The sequence spans 248 residues: Phosphate import ATP-binding protein PstB (248 aa).

The ABC transporter domain maps to 1–243 (MAVNDVNVFY…PQHNLTQGYI (243 aa)). 33–40 (GPSGCGKS) provides a ligand contact to ATP.

This sequence belongs to the ABC transporter superfamily. Phosphate importer (TC 3.A.1.7) family. The complex is composed of two ATP-binding proteins (PstB), two transmembrane proteins (PstC and PstA) and a solute-binding protein (PstS).

The protein localises to the cell inner membrane. The enzyme catalyses phosphate(out) + ATP + H2O = ADP + 2 phosphate(in) + H(+). Functionally, part of the ABC transporter complex PstSACB involved in phosphate import. Responsible for energy coupling to the transport system. In Rhodospirillum rubrum (strain ATCC 11170 / ATH 1.1.1 / DSM 467 / LMG 4362 / NCIMB 8255 / S1), this protein is Phosphate import ATP-binding protein PstB.